The following is a 356-amino-acid chain: Formate-nitrite transporter (356 aa).

Residues 1–108 (MPREKPRADE…TKATYPIMKM (108 aa)) lie on the Cytoplasmic side of the membrane. The chain crosses the membrane as a helical span at residues 109 to 129 (FSLSVLAGMLLSVGGLLSITI). Residues 130–142 (GKGIPSSDIGIQK) lie on the Extracellular side of the membrane. A helical membrane pass occupies residues 143–163 (IVFGFFNSVGLNLVVLCGGEL). The Cytoplasmic portion of the chain corresponds to 164-182 (FTSNCAFLIPGFMEGAYSR). Residues 183–203 (WLFFKTHFVVYFGNLVGSIFV) form a helical membrane-spanning segment. Residues 204 to 237 (STYFGKLLGSFESPMYLSAVKQIGETKVAMNWGR) lie on the Extracellular side of the membrane. A helical transmembrane segment spans residues 238-258 (ALLSGIGCNWLVCCAVYFSAS). Over 259-265 (AKDLLSK) the chain is Cytoplasmic. A helical transmembrane segment spans residues 266-286 (LVVISFLVLTFASLEFENCVG). The Extracellular portion of the chain corresponds to 287 to 310 (NMFLLSLSHMYGGNFTLGQWILNN). Residues 311–331 (LIPVSIGNFIGGTFLLGIPLW) traverse the membrane as a helical segment. Topologically, residues 332–356 (YVHVSNVYNIPFLDPLYQQSQAKTQ) are cytoplasmic.

The protein belongs to the FNT transporter (TC 1.A.16) family. As to quaternary structure, homopentamer.

The protein localises to the membrane. The catalysed reaction is (S)-lactate(in) + H(+)(in) = (S)-lactate(out) + H(+)(out). It catalyses the reaction formate(in) + H(+)(in) = formate(out) + H(+)(out). The enzyme catalyses pyruvate(out) + H(+)(out) = pyruvate(in) + H(+)(in). It carries out the reaction acetate(out) + H(+)(out) = acetate(in) + H(+)(in). Functionally, monocarboxylate-proton symporter; active in acidic-to-neutral pH range. Transports formate, acetate and L-lactate. The sequence is that of Formate-nitrite transporter from Entamoeba histolytica (strain ATCC 30459 / HM-1:IMSS / ABRM).